A 206-amino-acid polypeptide reads, in one-letter code: Probable NAD(+) phosphorylase Rv3189 (206 aa).

Belongs to the MbcT/ParT/Res family. In terms of assembly, forms a heterotetramer with cognate antitoxin Rv3188.

The enzyme catalyses phosphate + NAD(+) = ADP-alpha-D-ribose 1''-phosphate + nicotinamide + H(+). In terms of biological role, probable toxic component of a type II toxin-antitoxin (TA) system. Degrades NAD(+) by phosphorolysis. Neutralized by its cognate antitoxin Rv3188. In Mycobacterium tuberculosis (strain ATCC 25618 / H37Rv), this protein is Probable NAD(+) phosphorylase Rv3189.